The chain runs to 229 residues: Small ribosomal subunit protein uS3 (229 aa).

The KH type-2 domain occupies 39–109; the sequence is MRKYIKEQLM…QVNIDIVEIR (71 aa). The segment at 210-229 is disordered; the sequence is VVSQQNSRPSGPRGPRRPRA.

This sequence belongs to the universal ribosomal protein uS3 family. Part of the 30S ribosomal subunit. Forms a tight complex with proteins S10 and S14.

Binds the lower part of the 30S subunit head. Binds mRNA in the 70S ribosome, positioning it for translation. The chain is Small ribosomal subunit protein uS3 from Akkermansia muciniphila (strain ATCC BAA-835 / DSM 22959 / JCM 33894 / BCRC 81048 / CCUG 64013 / CIP 107961 / Muc).